Reading from the N-terminus, the 108-residue chain is uncharacterized protein (108 aa).

Positions 74–108 are disordered; it reads TGSKKRDSKANSRSRPSGTITSRGARIGLQGYKSH. Polar residues predominate over residues 84 to 95; the sequence is NSRSRPSGTITS.

This is an uncharacterized protein from Saccharomyces cerevisiae (strain ATCC 204508 / S288c) (Baker's yeast).